The chain runs to 194 residues: Calcium channel flower (194 aa).

A run of 3 helical transmembrane segments spans residues 35–55 (LGIV…FSII), 66–88 (IIQM…VCFE), and 113–133 (AIPP…GLIF).

Belongs to the calcium channel flower family. Homomultimer. Associates with the dally/ magu complex.

The protein resides in the cytoplasmic vesicle. Its subcellular location is the secretory vesicle. The protein localises to the synaptic vesicle membrane. It localises to the presynaptic cell membrane. It is found in the endosome. Its activity is regulated as follows. Channel activity is inhibited by La(3+), which reduces Ca(2+) influx and thus inhibits it's function in promoting activity-dependent bulk endocytosis (ADBE) in response to high stimuli. Functionally, transmembrane protein which mediates synaptic endocytosis, fitness-based cell culling, neuronal culling, morphogen gradient scaling, and calcium transport. Regulates synaptic endocytosis and hence couples exo- with endocytosis. Controls two major modes of synaptic vesicle (SV) endocytosis in the synaptic boutons of neuromuscular junctions (NMJs); Ca(2+) channel-independent Clathrin-mediated endocytosis (CME) in response to mild stimulation, and Ca(2+) channel-dependent activity-dependent bulk endocytosis (ADBE) in response to strong stimulation. Functions in ADBE and subsequent SV reformation from bulk endosomes by initiating Ca(2+) channel-dependent phosphatidylinositol 4,5-bisphosphate (PtdIns(4,5)P2) compartmentalization in synaptic boutons. There it acts at the periactive zone to provide the low Ca(2+) levels required to initiate Calcineurin activation and upregulate PtdIns(4,5)P2. Conversely PtdIns(4,5)P2 enhances fwe Ca(2+) channel-activity, establishing a positive feedback loop that induces PtdIns(4,5)P2 microdomain at the periactive zone. These microdomains trigger bulk membrane invagination (i.e. ADBE) by triggering actin polymerization while also promoting localization of fwe to bulk endosomes, thereby removing the ADBE trigger to reduce endocytosis and prevent excess membrane uptake. PtdIns(4,5)P2 then promotes SV reformation from the bulk endosomes, to coordinate ADBE and subsequent SV reformation. Different combinations of the flower isoforms at the cell membrane are also required for the identification and elimination of suboptimal or supernumerary cells during development, regeneration, and adulthood. Required for the recognition and elimination of unfit cells in the developing wing during cell competition. In the developing pupal retina, mediates the elimination of unwanted postmitotic neurons, including supernumerary photoreceptor neurons that form at the periphery of the retina and are contained within incomplete ommatidia units. Also required for efficient elimination and replacement of old neurons by newly generated neurons during regeneration in the adult brain following mechanical injury. Downstream of the flower fitness fingerprints, cells identified as unwanted or unfit are eliminated via apoptosis through the expression of ahuizotl (azot). However, the cells marked for elimination by the flower isoforms only undergo apoptosis if additional thresholds are met; (1) their neighboring fit/healthy cells express different levels of the fwe isoforms, and (2) the levels of the protective signal SPARC expressed by the loser or unwanted cells are unable to inhibit caspase activation. These additional thresholds for flower-mediated apoptosis, allows useful cells to recover from transient and limited stress before they are unnecessarily eliminated. Functions with dally and magu in a mechanism of scaling, which utilises apoptosis to ensure that the dpp morphogen gradient, which mediates organ growth, remains proportional to the size of the growing wing. In this mechanism, fwe represses dally- and Magu-dependent activity in expanding the gradient, and dally/Magu inhibits fwe-dependent apoptosis to keep cell death rate low. When the levels of these different proteins are optimally regulated the gradient correctly scales with organ growth but when this fails, fwe-mediated apoptosis is activated to trim the developing tissue to match the correct size of the gradient. In Drosophila yakuba (Fruit fly), this protein is Calcium channel flower.